The chain runs to 31 residues: U1-theraphotoxin-Cv1a (31 aa).

Cystine bridges form between Cys-2-Cys-16, Cys-9-Cys-21, and Cys-15-Cys-28.

As to expression, expressed by the venom gland.

The protein localises to the secreted. In terms of biological role, insecticidal toxin that induces reversible paralysis in crickets but not in cockroaches and mice. Molecular target unknown. This Coremiocnemis valida (Singapore tarantula) protein is U1-theraphotoxin-Cv1a.